The primary structure comprises 217 residues: Large ribosomal subunit protein uL3 (217 aa).

This sequence belongs to the universal ribosomal protein uL3 family. As to quaternary structure, part of the 50S ribosomal subunit. Forms a cluster with proteins L14 and L19.

Functionally, one of the primary rRNA binding proteins, it binds directly near the 3'-end of the 23S rRNA, where it nucleates assembly of the 50S subunit. The polypeptide is Large ribosomal subunit protein uL3 (Mycolicibacterium smegmatis (strain ATCC 700084 / mc(2)155) (Mycobacterium smegmatis)).